A 509-amino-acid chain; its full sequence is Ribonuclease E/G-like protein (509 aa).

Residues 35–117 (SDIYLGCVDK…LTANITLSGR (83 aa)) form the S1 motif domain. Mg(2+)-binding residues include aspartate 296 and aspartate 339.

This sequence belongs to the RNase E/G family. Mg(2+) serves as cofactor.

The protein resides in the plastid. Its subcellular location is the chloroplast stroma. Involved in intercistronic processing of primary transcripts from chloroplast operons. The endonucleolytic activity of the enzyme depends on the number of phosphates at the 5' end, is inhibited by structured RNA, and preferentially cleaves A/U-rich sequences. The chain is Ribonuclease E/G-like protein (rne) from Pyropia yezoensis (Susabi-nori).